Consider the following 111-residue polypeptide: Probable 4-amino-4-deoxy-L-arabinose-phosphoundecaprenol flippase subunit ArnE (111 aa).

The next 3 helical transmembrane spans lie at 38–58 (LWLGLALICMGAAMVLWLLVL), 61–81 (LPVGIAYPMLSLNFVWVTLAA), and 91–111 (PRHWFGVALIISGIIILGSAA). An EamA domain is found at 40–109 (LGLALICMGA…IISGIIILGS (70 aa)).

It belongs to the ArnE family. In terms of assembly, heterodimer of ArnE and ArnF.

The protein resides in the cell inner membrane. It participates in bacterial outer membrane biogenesis; lipopolysaccharide biosynthesis. Translocates 4-amino-4-deoxy-L-arabinose-phosphoundecaprenol (alpha-L-Ara4N-phosphoundecaprenol) from the cytoplasmic to the periplasmic side of the inner membrane. This is Probable 4-amino-4-deoxy-L-arabinose-phosphoundecaprenol flippase subunit ArnE from Salmonella enteritidis PT4 (strain P125109).